Here is a 500-residue protein sequence, read N- to C-terminus: Glycerol kinase (500 aa).

T13 contributes to the ADP binding site. Residues T13, T14, and S15 each contribute to the ATP site. Position 13 (T13) interacts with sn-glycerol 3-phosphate. R17 contacts ADP. R83, E84, Y135, and D244 together coordinate sn-glycerol 3-phosphate. Positions 83, 84, 135, 244, and 245 each coordinate glycerol. Residues T266 and G309 each coordinate ADP. T266, G309, Q313, and G410 together coordinate ATP. Positions 410 and 414 each coordinate ADP.

It belongs to the FGGY kinase family.

It catalyses the reaction glycerol + ATP = sn-glycerol 3-phosphate + ADP + H(+). The protein operates within polyol metabolism; glycerol degradation via glycerol kinase pathway; sn-glycerol 3-phosphate from glycerol: step 1/1. Its activity is regulated as follows. Inhibited by fructose 1,6-bisphosphate (FBP). In terms of biological role, key enzyme in the regulation of glycerol uptake and metabolism. Catalyzes the phosphorylation of glycerol to yield sn-glycerol 3-phosphate. The sequence is that of Glycerol kinase from Burkholderia multivorans (strain ATCC 17616 / 249).